The sequence spans 196 residues: Carnitine operon protein CaiE (196 aa).

The segment at Thr-173 to Arg-196 is disordered. Residues Gln-187 to Arg-196 show a composition bias toward polar residues.

It belongs to the transferase hexapeptide repeat family.

It participates in amine and polyamine metabolism; carnitine metabolism. Functionally, overproduction of CaiE stimulates the activity of CaiB and CaiD. This Escherichia coli O157:H7 protein is Carnitine operon protein CaiE.